Reading from the N-terminus, the 330-residue chain is Exostosin-like 2 (330 aa).

Topologically, residues 1-22 are cytoplasmic; it reads MRCCHICKLPGRVMGIRVLRLS. The helical; Signal-anchor for type II membrane protein transmembrane segment at 23–43 threads the bilayer; that stretch reads LVVILVLLLVAGALTALLPSV. Residues 44 to 330 are Lumenal-facing; the sequence is KEDKMLMLRR…FPYANYKRKI (287 aa). Glutamine 71 provides a ligand contact to UDP-N-acetyl-alpha-D-galactosamine. Glutamine 71 is a binding site for UDP-N-acetyl-alpha-D-glucosamine. Asparagine 74 carries N-linked (GlcNAc...) asparagine glycosylation. Arginine 75, asparagine 100, asparagine 129, arginine 134, aspartate 150, aspartate 151, aspartate 152, and aspartate 244 together coordinate UDP-N-acetyl-alpha-D-galactosamine. UDP-N-acetyl-alpha-D-glucosamine-binding residues include arginine 75, asparagine 100, asparagine 129, arginine 134, aspartate 150, aspartate 151, aspartate 152, aspartate 244, aspartate 245, and arginine 293. Aspartate 152 contributes to the Mn(2+) binding site. An intrachain disulfide couples cysteine 243 to cysteine 296. Aspartate 245 is a catalytic residue. A UDP-N-acetyl-alpha-D-galactosamine-binding site is contributed by arginine 293.

It belongs to the glycosyltransferase 47 family. It depends on Mn(2+) as a cofactor. The soluble form derives from the membrane form by proteolytic processing. In terms of tissue distribution, ubiquitous.

The protein resides in the endoplasmic reticulum membrane. Its subcellular location is the secreted. The enzyme catalyses 3-O-(beta-D-GlcA-(1-&gt;3)-beta-D-Gal-(1-&gt;3)-beta-D-Gal-(1-&gt;4)-beta-D-Xyl)-L-seryl-[protein] + UDP-N-acetyl-alpha-D-glucosamine = 3-O-(alpha-D-GlcNAc-(1-&gt;4)-beta-D-GlcA-(1-&gt;3)-beta-D-Gal-(1-&gt;3)-beta-D-Gal-(1-&gt;4)-beta-D-Xyl)-L-seryl-[protein] + UDP + H(+). It participates in glycan metabolism; heparan sulfate biosynthesis. Functionally, glycosyltransferase required for the biosynthesis of heparan-sulfate and responsible for the alternating addition of beta-1-4-linked glucuronic acid (GlcA) and alpha-1-4-linked N-acetylglucosamine (GlcNAc) units to nascent heparan sulfate chains. This chain is Exostosin-like 2 (EXTL2), found in Homo sapiens (Human).